Consider the following 394-residue polypeptide: MSSEQREGSQETTTTTVEGNGTIAGQNSHSAAPTTLRATSTMVSCQRLRLNPNNEHRPDSYEDLQLDFPNSVYSSLEKYLPPNMLVSNRDEKIKFMTDIMLRHLPHGERSRAQRHSDYRLKITTNYQPLHKELYTLVPTVCFVPAFLKAINENTEESFRNIISEPSPGVFVFDMLQPSFCEMMLAEIDNFERWVGETKFRIMRPNTMNKYGAVLDDFGLDTMLDKLMEGFIRPISKVFFSDVGGATLDSHHGFVVEYGKDRDVDLGFHVDDSEVTLNVCLGNQFVGGELFFRGTRCEKHVNTATKADETYDYCHIPGQAVLHRGRHRHGARATTCGHRVNMLLWCRSSVFRELKTHHKDFSSWCGECFCEKRDEKVRSIDALRKKLFKPRQTQA.

The disordered stretch occupies residues 1–35 (MSSEQREGSQETTTTTVEGNGTIAGQNSHSAAPTT). Residues 17-35 (VEGNGTIAGQNSHSAAPTT) are compositionally biased toward polar residues. Residues 248–347 (DSHHGFVVEY…RVNMLLWCRS (100 aa)) enclose the Fe2OG dioxygenase domain. Residues H268, D270, and H328 each contribute to the Fe cation site. R338 contributes to the 2-oxoglutarate binding site.

The cofactor is Fe(2+). It depends on L-ascorbate as a cofactor. As to expression, expressed in roots, cotyledons, rosette leaves, cauline leaves, inflorescences and siliques.

It is found in the nucleus. It localises to the nucleoplasm. In terms of biological role, participates in the epigenetic repression of flowering genes in association with ICU11. Functions in the repression of several members of the MADS-box transcription factors family, including SEP3, during vegetative development via histone modification. In Arabidopsis thaliana (Mouse-ear cress), this protein is 2-oxoglutarate and iron-dependent oxygenase domain-containing protein CP2.